Reading from the N-terminus, the 354-residue chain is Methylthioribose-1-phosphate isomerase (354 aa).

Substrate contacts are provided by residues 58-60 (RGA), Arg101, and Gln204. Asp245 serves as the catalytic Proton donor. 255–256 (NK) serves as a coordination point for substrate.

Belongs to the eIF-2B alpha/beta/delta subunits family. MtnA subfamily.

The catalysed reaction is 5-(methylsulfanyl)-alpha-D-ribose 1-phosphate = 5-(methylsulfanyl)-D-ribulose 1-phosphate. It functions in the pathway amino-acid biosynthesis; L-methionine biosynthesis via salvage pathway; L-methionine from S-methyl-5-thio-alpha-D-ribose 1-phosphate: step 1/6. Catalyzes the interconversion of methylthioribose-1-phosphate (MTR-1-P) into methylthioribulose-1-phosphate (MTRu-1-P). The chain is Methylthioribose-1-phosphate isomerase from Xylella fastidiosa (strain M12).